We begin with the raw amino-acid sequence, 621 residues long: Chaperone protein DnaK (621 aa).

The residue at position 179 (Thr-179) is a Phosphothreonine; by autocatalysis. The segment covering 583 to 605 (SQVQDTQGAAQGQSQGNPQQTAD) has biased composition (polar residues). Residues 583–621 (SQVQDTQGAAQGQSQGNPQQTADNRGKVVDAEIVDENKE) are disordered. Over residues 606 to 621 (NRGKVVDAEIVDENKE) the composition is skewed to basic and acidic residues.

This sequence belongs to the heat shock protein 70 family.

Acts as a chaperone. The protein is Chaperone protein DnaK of Endomicrobium trichonymphae.